The following is an 86-amino-acid chain: Weak neurotoxin 10 (86 aa).

An N-terminal signal peptide occupies residues Met1–Thr21. Cystine bridges form between Cys24/Cys45, Cys27/Cys32, Cys38/Cys63, Cys67/Cys78, and Cys79/Cys84.

This sequence belongs to the three-finger toxin family. Ancestral subfamily. Orphan group II sub-subfamily. In terms of tissue distribution, expressed by the venom gland.

The protein resides in the secreted. In terms of biological role, binds with low affinity to muscular (alpha-1-beta-1-delta-epsilon/CHRNA1-CHRNB1-CHRND-CHRNE) and very low affinity to neuronal (alpha-7/CHRNA7) nicotinic acetylcholine receptor (nAChR). The protein is Weak neurotoxin 10 (WNTX10) of Naja sputatrix (Malayan spitting cobra).